A 244-amino-acid chain; its full sequence is 14-3-3 protein beta/alpha-A (244 aa).

M1 carries the N-acetylmethionine modification.

The protein belongs to the 14-3-3 family. In terms of assembly, homodimer, and heterodimer with other family members.

The protein resides in the cytoplasm. Its function is as follows. Adapter protein implicated in the regulation of a large spectrum of both general and specialized signaling pathways. Binds to a large number of partners, usually by recognition of a phosphoserine or phosphothreonine motif. Binding generally results in the modulation of the activity of the binding partner. This Xenopus laevis (African clawed frog) protein is 14-3-3 protein beta/alpha-A (ywhab-a).